The following is a 313-amino-acid chain: Protoheme IX farnesyltransferase (313 aa).

9 consecutive transmembrane segments (helical) span residues 35 to 55 (LVIF…HPVL), 56 to 76 (AFTS…LNMW), 98 to 118 (VSKP…VVTL), 120 to 140 (ILVN…YVVI), 153 to 173 (IVIG…AAAG), 180 to 200 (MLLF…LALF), 226 to 246 (ILLY…LGYF), 248 to 268 (AIYG…TLRV), and 285 to 305 (FKFS…EVIV).

Belongs to the UbiA prenyltransferase family. Protoheme IX farnesyltransferase subfamily.

It is found in the cell inner membrane. The catalysed reaction is heme b + (2E,6E)-farnesyl diphosphate + H2O = Fe(II)-heme o + diphosphate. It functions in the pathway porphyrin-containing compound metabolism; heme O biosynthesis; heme O from protoheme: step 1/1. Converts heme B (protoheme IX) to heme O by substitution of the vinyl group on carbon 2 of heme B porphyrin ring with a hydroxyethyl farnesyl side group. In Rhodopseudomonas palustris (strain BisB18), this protein is Protoheme IX farnesyltransferase.